The sequence spans 2215 residues: Sortilin-related receptor (2215 aa).

An N-terminal signal peptide occupies residues 1–28 (MATRSSRRESRLPFLFALVALLPRGALG). The propeptide at 29-81 (GGWTQRLHGGPAPLPQDRGFFVVQGDPRDLRLGTHGDAPGASPAARKPLRTRR) is removed in mature form. A disordered region spans residues 59-84 (RLGTHGDAPGASPAARKPLRTRRSAA). The Lumenal portion of the chain corresponds to 82–2138 (SAALQPQPIQ…IQAARSTDVA (2057 aa)). The N-linked (GlcNAc...) asparagine glycan is linked to asparagine 99. Residue serine 114 is modified to Phosphoserine. The stretch at 136–147 (YVSYDYGKSFSK) is one BNR 1 repeat. Asparagine 158 carries N-linked (GlcNAc...) asparagine glycosylation. A BNR 2 repeat occupies 232-243 (WKSDDFGQTWIM). Residues asparagine 367, asparagine 368, and asparagine 430 are each glycosylated (N-linked (GlcNAc...) asparagine). 3 BNR repeats span residues 441 to 452 (VITFDKGGTWEF), 521 to 532 (YISSSAGARWRE), and 562 to 573 (KYSTNEGETWKT). N-linked (GlcNAc...) asparagine glycans are attached at residues asparagine 616, asparagine 674, asparagine 818, and asparagine 871. LDL-receptor class B repeat units lie at residues 800–843 (NCLY…EPLS), 844–887 (QLLY…VPQE), 888–932 (GVMF…DSQW), 933–972 (IYWT…FKNE), and 973–1013 (IYWD…FYKG). The 47-residue stretch at 1026–1072 (CSLLCLPKANNSKSCRCPEGVASSVLPSGDLMCDCPQGYQRKNNTCV) folds into the EGF-like domain. Asparagine 1035 and asparagine 1068 each carry an N-linked (GlcNAc...) asparagine glycan. LDL-receptor class A domains are found at residues 1076–1114 (NTCL…NCPT), 1115–1155 (TVCD…HCEM), 1156–1194 (HQCR…NCTA), 1198–1236 (TCEA…VSCE), 1238–1272 (KCNG…QHCE), 1273–1317 (PFCT…GCSQ), 1323–1361 (KECD…NCEN), 1366–1405 (PNCS…DCGD), and 1417–1455 (STCL…ACPS). Cystine bridges form between cysteine 1078/cysteine 1090, cysteine 1085/cysteine 1103, cysteine 1097/cysteine 1112, cysteine 1117/cysteine 1131, cysteine 1125/cysteine 1144, cysteine 1138/cysteine 1153, cysteine 1158/cysteine 1170, cysteine 1165/cysteine 1183, cysteine 1177/cysteine 1192, cysteine 1199/cysteine 1211, cysteine 1206/cysteine 1224, cysteine 1218/cysteine 1235, cysteine 1239/cysteine 1249, cysteine 1244/cysteine 1262, cysteine 1256/cysteine 1271, cysteine 1275/cysteine 1289, cysteine 1283/cysteine 1302, cysteine 1296/cysteine 1315, cysteine 1325/cysteine 1337, cysteine 1332/cysteine 1350, and cysteine 1344/cysteine 1359. Asparagine 1164 is a glycosylation site (N-linked (GlcNAc...) asparagine). Asparagine 1191 carries an N-linked (GlcNAc...) asparagine glycan. Asparagine 1246 carries an N-linked (GlcNAc...) asparagine glycan. Asparagine 1367 carries an N-linked (GlcNAc...) asparagine glycan. Disulfide bonds link cysteine 1368–cysteine 1381, cysteine 1376–cysteine 1394, cysteine 1388–cysteine 1403, cysteine 1419–cysteine 1431, cysteine 1426–cysteine 1444, and cysteine 1438–cysteine 1453. Asparagine 1458 carries N-linked (GlcNAc...) asparagine glycosylation. LDL-receptor class A domains lie at 1469-1508 (GQCD…NCPT) and 1512-1551 (LTCT…ACSD). Disulfide bonds link cysteine 1471/cysteine 1484, cysteine 1478/cysteine 1497, cysteine 1491/cysteine 1506, cysteine 1514/cysteine 1527, cysteine 1521/cysteine 1540, and cysteine 1534/cysteine 1549. Fibronectin type-III domains lie at 1557–1649 (KVQN…TPEG), 1653–1745 (APRN…TIKG), 1747–1846 (VIQA…SPPA), 1844–1928 (PPAP…VVKM), 1935–2030 (PPRH…APDA), and 2031–2119 (LKII…LYDE). 12 N-linked (GlcNAc...) asparagine glycosylation sites follow: asparagine 1608, asparagine 1706, asparagine 1733, asparagine 1810, asparagine 1855, asparagine 1895, asparagine 1987, asparagine 2011, asparagine 2055, asparagine 2070, asparagine 2077, and asparagine 2093. A helical membrane pass occupies residues 2139-2159 (AVVVPILFLILLSLGVGFAIL). Over 2160 to 2215 (YTKHRRLQSSFSAFANSHYSSRLGSAIFSSGDDLGEDDEDAPMITGFSDDVPMVIA) the chain is Cytoplasmic. The Potential nuclear localization signal for the C-terminal fragment generated by PSEN1 motif lies at 2162–2165 (KHRR). An Endocytosis signal motif is present at residues 2173–2178 (FANSHY). Positions 2191–2215 (DDLGEDDEDAPMITGFSDDVPMVIA) are required for efficient Golgi apparatus - endosome sorting. The tract at residues 2202–2215 (MITGFSDDVPMVIA) is required for interaction with GGA1 and GGA2. At serine 2207 the chain carries Phosphoserine; by ROCK2. Residues 2209–2213 (DVPMV) carry the DXXLL motif involved in the interaction with GGA1 motif.

Belongs to the VPS10-related sortilin family. SORL1 subfamily. In terms of assembly, after maturation cleavage, interacts (via N-terminus) with its own propeptide; this interaction prevents interaction with other ligands, including CRLF1, GDNF, GFRA1, IL6 and IL6R. Interacts (via N-terminal ectodomain) with APP, forming a 1:1 stoichiometric complex, including with isoforms APP695, APP751 and APP770; this interaction retains APP in the trans-Golgi network and reduces processing into soluble APP-alpha and amyloid-beta peptides. Also interacts with APP C-terminal fragment C99 and with Abeta40. Interacts with beta-secretase BACE1/BACE; this interaction may affect BACE1-binding to APP and hence reduce BACE1-dependent APP cleavage. Interacts with LRPAP1/RAP. Interacts (via C-terminal cytosolic domain) with GGA1 and GGA2 (via N-terminal VHS domain). Interacts with PACS1. May interact (via the N-terminal ectodomain) with the morphogenetic neuropeptide, also called head activator or HA; this interaction is impaired in the presence of propeptide. Interacts with neurotensin/NTS. Interacts (via the N-terminal ectodomain) with PDGFB homodimer. Interacts (via N-terminal ectodomain) with the uPA receptor PLAUR. Interacts with uPA/PLAU and PAI1/SERPINE1, either individually or in complex with each other, leading to endocytosis. Also interacts with PAI1/SERPINE1 in complex with tPA/PLAT. Interacts (via C-terminus) with AP-1 and AP-2 complexes. Interacts with BMPR1A and BMPR1B. Interacts with lipoprotein lipase LPL; this interaction is optimal in slightly acidic conditions. Interacts (via N-terminal ectodomain) with GDNF (via propeptide) and GDNF receptor alpha-1/GFRA1, either individually or in complex with each other. The interaction with GDNF occurs mostly intracellularly. Also interacts with other GDNF receptor alpha family members, including GFRA2, GFRA3 and GFRA4. Interacts with the insulin receptor INSR; this interaction strongly increases the surface exposure of INSR. Interacts (via cytosolic C-terminus) with STK39/SPAK. Interacts (via N-terminal ectodomain) with the heterodimeric complex CRLF1-CLC; within this complex, the interaction is mediated predominantly by the CRLF1 moiety. Interacts with CNTFR, as well as with the tripartite signaling complex formed by CRLF1, CLC and CNTFR. Interacts (via N-terminal ectodomain) with IL6; this interaction leads to IL6 internalization and lysosomal degradation. Binding of SOLRL1 secreted N-terminal ectodomain to IL6 may increase IL6 trans signaling. Interacts with secreted IL6R; this interaction leads to IL6R internalization. Also interacts with transmembrane IL6R; this interaction does not affect subcellular location. Interacts with APOE. Interacts with apolipoprotein E-rich beta-VLDL. Interacts with APOA5; this interaction leads to APOA5 internalization and is abolished by heparin. Interaction with APOA5 results in enhanced binding to chylomicrons. Interacts with ROCK2. Interacts (via cytosolic C-terminus) with PPP3CB/calcineurin A beta. Interacts with NTRK2/TRKB; this interaction facilitates NTRK2 trafficking between synaptic plasma membranes, postsynaptic densities and cell soma, hence positively regulates BDNF signaling. Interacts (via cytosolic C-terminus) with HSPA12A in an ADP-dependent manner; this interaction affects SORL1 internalization and subcellular localization. Interacts (via N-terminal ectodomain) with ERBB2/HER2. Post-translationally, within the Golgi apparatus, the propeptide may be cleaved off by FURIN or a furin-like protease. After cleavage, the propeptide interacts with the mature protein N-terminus, preventing the association with other ligands. At the cell surface, partially subjected to proteolytic shedding that releases the ectodomain in the extracellular milieu. The shedding may be catalyzed by ADAM17/TACE. Following shedding, PSEN1/presenilin-1 cleaves the remaining transmembrane fragment and catalyzes the release of a C-terminal fragment in the cytosol and of a soluble N-terminal beta fragment in the extracellular milieu. The C-terminal cytosolic fragment localizes to the nucleus. Phosphorylation at Ser-2207 facilitates the interaction with GGA1. Highly expressed in the central nervous system, including in the brain and spinal cord, in neurons, as well as in glial cells (at protein level). In the brain, mainly expressed in the cerebellum, hippocampus, dentate gyrus, hypothalamus, and in the cerebral cortex (at protein level). Also detected in kidney, heart, lung and spleen. In the kidney, expressed in epithelial cells in the thick ascending limb of Henle's loop, the distal convoluted tubule, the connecting tubule and the cortical collecting duct (at protein level). Expressed in skeletal muscle (at protein level). Expressed in adipose tissue, including in brown adipose tissue and subcutaneous white adipose tissue. Expressed in intimal smooth muscle cells (at protein level).

Its subcellular location is the golgi apparatus membrane. The protein resides in the golgi apparatus. It is found in the trans-Golgi network membrane. The protein localises to the endosome membrane. It localises to the early endosome membrane. Its subcellular location is the recycling endosome membrane. The protein resides in the endoplasmic reticulum membrane. It is found in the endosome. The protein localises to the multivesicular body membrane. It localises to the cell membrane. Its subcellular location is the cytoplasmic vesicle. The protein resides in the secretory vesicle membrane. It is found in the secreted. Sorting receptor that directs several proteins to their correct location within the cell. Along with AP-1 complex, involved Golgi apparatus - endosome sorting. Sorting receptor for APP, regulating its intracellular trafficking and processing into amyloidogenic-beta peptides. Retains APP in the trans-Golgi network, hence preventing its transit through late endosomes where amyloid beta peptides Abeta40 and Abeta42 are generated. May also sort newly produced amyloid-beta peptides to lysosomes for catabolism. Does not affect APP trafficking from the endoplasmic reticulum to Golgi compartments. Sorting receptor for the BDNF receptor NTRK2/TRKB that facilitates NTRK2 trafficking between synaptic plasma membranes, postsynaptic densities and cell soma, hence positively regulates BDNF signaling by controlling the intracellular location of its receptor. Sorting receptor for GDNF that promotes GDNF regulated, but not constitutive secretion. Sorting receptor for the GDNF-GFRA1 complex, directing it from the cell surface to endosomes. GDNF is then targeted to lysosomes and degraded, while its receptor GFRA1 recycles back to the cell membrane, resulting in a GDNF clearance pathway. The SORL1-GFRA1 complex further targets RET for endocytosis, but not for degradation, affecting GDNF-induced neurotrophic activities. Sorting receptor for ERBB2/HER2. Regulates ERBB2 subcellular distribution by promoting its recycling after internalization from endosomes back to the plasma membrane, hence stimulating phosphoinositide 3-kinase (PI3K)-dependent ERBB2 signaling. Sorting receptor for lipoprotein lipase LPL. Promotes LPL localization to endosomes and later to the lysosomes, leading to degradation of newly synthesized LPL. Potential sorting receptor for APOA5, inducing APOA5 internalization to early endosomes, then to late endosomes, wherefrom a portion is sent to lysosomes and degradation, another portion is sorted to the trans-Golgi network. Sorting receptor for the insulin receptor INSR. Promotes recycling of internalized INSR via the Golgi apparatus back to the cell surface, thereby preventing lysosomal INSR catabolism, increasing INSR cell surface expression and strengthening insulin signal reception in adipose tissue. Does not affect INSR internalization. Plays a role in renal ion homeostasis, controlling the phospho-regulation of SLC12A1/NKCC2 by STK39/SPAK kinase and PPP3CB/calcineurin A beta phosphatase, possibly through intracellular sorting of STK39 and PPP3CB. Stimulates, via the N-terminal ectodomain, the proliferation and migration of smooth muscle cells, possibly by increasing cell surface expression of the urokinase receptor uPAR/PLAUR. This may promote extracellular matrix proteolysis and hence facilitate cell migration. By acting on the migration of intimal smooth muscle cells, may accelerate intimal thickening following vascular injury. Promotes adhesion of monocytes. Stimulates proliferation and migration of monocytes/macrophages. Through its action on intimal smooth muscle cells and macrophages, may accelerate intimal thickening and macrophage foam cell formation in the process of atherosclerosis. Regulates hypoxia-enhanced adhesion of hematopoietic stem and progenitor cells to the bone marrow stromal cells via a PLAUR-mediated pathway. This function is mediated by the N-terminal ectodomain. Metabolic regulator, which functions to maintain the adequate balance between lipid storage and oxidation in response to changing environmental conditions, such as temperature and diet. The N-terminal ectodomain negatively regulates adipose tissue energy expenditure, acting through the inhibition the BMP/Smad pathway. May regulate signaling by the heterodimeric neurotrophic cytokine CLCF1-CRLF1 bound to the CNTFR receptor by promoting the endocytosis of the tripartite complex CLCF1-CRLF1-CNTFR and lysosomal degradation. May regulate IL6 signaling, decreasing cis signaling, possibly by interfering with IL6-binding to membrane-bound IL6R, while up-regulating trans signaling via soluble IL6R. The chain is Sortilin-related receptor (Sorl1) from Mus musculus (Mouse).